Here is a 294-residue protein sequence, read N- to C-terminus: Kynurenine formamidase (294 aa).

A compositionally biased stretch (basic and acidic residues) spans 1–14; it reads MSRWKDMNKDELER. Positions 1–20 are disordered; the sequence is MSRWKDMNKDELERQFSPSQ. The short motif at 84 to 88 is the HGGXW element; that stretch reads HGGYW. Ser153 functions as the Nucleophile in the catalytic mechanism. Residues Asp236 and His269 contribute to the active site.

This sequence belongs to the kynurenine formamidase family. Homodimer.

Its subcellular location is the cytoplasm. The protein localises to the cytosol. It is found in the nucleus. It catalyses the reaction N-formyl-L-kynurenine + H2O = L-kynurenine + formate + H(+). Its pathway is amino-acid degradation; L-tryptophan degradation via kynurenine pathway; L-kynurenine from L-tryptophan: step 2/2. Functionally, catalyzes the hydrolysis of N-formyl-L-kynurenine to L-kynurenine, the second step in the kynurenine pathway of tryptophan degradation. Kynurenine may be further oxidized to nicotinic acid, NAD(H) and NADP(H). Required for elimination of toxic metabolites. The protein is Kynurenine formamidase (afmid) of Salmo salar (Atlantic salmon).